The following is a 327-amino-acid chain: Homeotic protein distal-less (327 aa).

Positions 124-183 (MRKPRTIYSSLQLQQLNRRFQRTQYLALPERAELAASLGLTQTQVKIWFQNRRSKYKKMM) form a DNA-binding region, homeobox. The tract at residues 181-303 (KMMKAAQGPG…THHHNPPPQM (123 aa)) is disordered. The span at 231–249 (LPPGHSPTPSSTPVSELSP) shows a compositional bias: low complexity. A compositionally biased stretch (basic and acidic residues) spans 266–275 (QKPHWIDHKP). The segment covering 276–286 (PPQMTPQPPHP) has biased composition (pro residues).

Expressed in the embryo in limb primordia of the head and thoracic segments. Expressed in regions of the larval leg, wing, antennal and haltere disks that form the distal-most regions of the mature structures (in the leg this corresponds to the tarsus and the distal tibia). Found in the optic center of the developing larval brain.

Its subcellular location is the nucleus. In terms of biological role, transcription factor that plays a role in larval and adult appendage development. Specifies the identity of ventral appendages (including legs and antennae) and suppresses dorsal appendage development. Involved in patterning the distal-proximal limb axis. May control the adhesive properties of cells during limb morphogenesis. Also has a secondary role in the normal patterning of the wing margin. In Drosophila melanogaster (Fruit fly), this protein is Homeotic protein distal-less (Dll).